Consider the following 68-residue polypeptide: Small ribosomal subunit protein bS21 (68 aa).

It belongs to the bacterial ribosomal protein bS21 family.

The sequence is that of Small ribosomal subunit protein bS21 from Cereibacter sphaeroides (strain ATCC 17029 / ATH 2.4.9) (Rhodobacter sphaeroides).